Reading from the N-terminus, the 357-residue chain is DNA replication and repair protein RecF (357 aa).

Residue 31–38 participates in ATP binding; the sequence is GQNGAGKT.

Belongs to the RecF family.

It localises to the cytoplasm. Functionally, the RecF protein is involved in DNA metabolism; it is required for DNA replication and normal SOS inducibility. RecF binds preferentially to single-stranded, linear DNA. It also seems to bind ATP. This Coxiella burnetii (strain CbuG_Q212) (Coxiella burnetii (strain Q212)) protein is DNA replication and repair protein RecF.